Here is a 224-residue protein sequence, read N- to C-terminus: Lipoprotein-releasing system ATP-binding protein LolD (224 aa).

Residues 5-224 (LEILDVSKCY…SLSGGMLTEL (220 aa)) form the ABC transporter domain. Residue 40-47 (GSSGSGKS) participates in ATP binding.

Belongs to the ABC transporter superfamily. Lipoprotein translocase (TC 3.A.1.125) family. The complex is composed of two ATP-binding proteins (LolD) and two transmembrane proteins (LolC and LolE).

It localises to the cell inner membrane. Functionally, part of the ABC transporter complex LolCDE involved in the translocation of mature outer membrane-directed lipoproteins, from the inner membrane to the periplasmic chaperone, LolA. Responsible for the formation of the LolA-lipoprotein complex in an ATP-dependent manner. The polypeptide is Lipoprotein-releasing system ATP-binding protein LolD (Anaplasma marginale (strain St. Maries)).